A 253-amino-acid chain; its full sequence is Histone-arginine methyltransferase METTL23 (253 aa).

Residues 1–23 (MDSVRPRAPWAPPPDPASLDSPT) form a disordered region.

The protein belongs to the methyltransferase superfamily. METTL23 family. In terms of assembly, interacts with HSPA5, HSP90B1, TUBULIN, UGGT1 and UGGT2. Interacts with TET3. Interacts with STPG4. In terms of tissue distribution, ubiquitously expressed.

The protein localises to the nucleus. The protein resides in the cytoplasm. The catalysed reaction is L-arginyl-[protein] + 2 S-adenosyl-L-methionine = N(omega),N(omega)-dimethyl-L-arginyl-[protein] + 2 S-adenosyl-L-homocysteine + 2 H(+). Functionally, histone methyltransferase that dimethylates histone H3 at 'Arg-17', forming asymmetric dimethylarginine (H3R17me2a), leading to activate transcription via chromatin remodeling. Maternal factor involved in epigenetic chromatin reprogramming of the paternal genome in the zygote: mediates H3R17me2a, promoting histone H3.3 incorporation in the male pronucleus, leading to TET3 recruitment and subsequent DNA demethylation. This is Histone-arginine methyltransferase METTL23 from Mus musculus (Mouse).